Reading from the N-terminus, the 352-residue chain is Aspartic protease Bla g 2 (352 aa).

A signal peptide spans 1–19 (MIGLKLVTVLFAVATITHA). The propeptide at 20 to 24 (AELQR) is removed in mature form. Positions 39-346 (YAGITKIGNQ…NWENKTMGFG (308 aa)) constitute a Peptidase A1 domain. Asp-55 is an active-site residue. Intrachain disulfides connect Cys-59-Cys-151, Cys-68-Cys-73, and Cys-75-Cys-136. Asn-117 carries an N-linked (GlcNAc...) asparagine glycan. Positions 178 and 186 each coordinate Zn(2+). Asp-239 is a catalytic residue. Cystine bridges form between Cys-261/Cys-272 and Cys-276/Cys-309. Residue Asn-295 is glycosylated (N-linked (GlcNAc...) asparagine). Zn(2+) is bound by residues Asp-326 and Asp-330. N-linked (GlcNAc...) asparagine glycosylation is present at Asn-340.

It belongs to the peptidase A1 family. Homodimer.

Functions as a digestive enzyme in the cockroach. This is Aspartic protease Bla g 2 from Blattella germanica (German cockroach).